The sequence spans 111 residues: Aquaporin-2 (111 aa).

The Cytoplasmic portion of the chain corresponds to 1–6 (SIAFSR). Residues 7 to 27 (AVFSEFLATLLFVFFGLGSAL) traverse the membrane as a helical segment. Residues 28 to 37 (NWPSTVPIPT) lie on the Extracellular side of the membrane. The helical transmembrane segment at 38-56 (VLQISMAFGLAIGTLVQTL) threads the bilayer. The Cytoplasmic portion of the chain corresponds to 57–61 (GHISG). An intramembrane region (discontinuously helical) is located at residues 62 to 71 (AHINPAVTVA). The NPA 1 motif lies at 65–67 (NPA). Residues 72-82 (CLVGCHVSFLR) are Cytoplasmic-facing. The chain crosses the membrane as a helical span at residues 83–104 (ATFYVAAQLLGAVAGAALLHKL). Over 105 to 111 (TPEDIRG) the chain is Extracellular.

This sequence belongs to the MIP/aquaporin (TC 1.A.8) family. As to quaternary structure, homotetramer. In terms of processing, serine phosphorylation is necessary and sufficient for expression at the apical membrane. Endocytosis is not phosphorylation-dependent. N-glycosylated.

Its subcellular location is the apical cell membrane. The protein localises to the basolateral cell membrane. It localises to the cell membrane. It is found in the cytoplasmic vesicle membrane. The protein resides in the golgi apparatus. Its subcellular location is the trans-Golgi network membrane. The enzyme catalyses H2O(in) = H2O(out). It carries out the reaction glycerol(in) = glycerol(out). Forms a water-specific channel that provides the plasma membranes of renal collecting duct with high permeability to water, thereby permitting water to move in the direction of an osmotic gradient. Plays an essential role in renal water homeostasis. Could also be permeable to glycerol. This Macroscelides proboscideus (Short-eared elephant shrew) protein is Aquaporin-2.